The following is a 220-amino-acid chain: Adenylate kinase (220 aa).

13-18 (GAGKGT) contributes to the ATP binding site. The NMP stretch occupies residues 33-62 (STGDILRAAVKEGTPLGLEAQSYMNRGALV). AMP contacts are provided by residues T34, R39, 60–62 (ALV), 88–91 (GFPR), and Q95. The segment at 129-170 (GRRTCPLCKRIFHVRFNPPPAAPPFCTDHTDCPSELVQRPDD) is LID. R130 serves as a coordination point for ATP. C133 and C136 together coordinate Zn(2+). Position 139-140 (139-140 (IF)) interacts with ATP. Zn(2+)-binding residues include D156 and C160. AMP-binding residues include R167 and R178. R206 provides a ligand contact to ATP.

The protein belongs to the adenylate kinase family. As to quaternary structure, monomer.

The protein resides in the cytoplasm. It catalyses the reaction AMP + ATP = 2 ADP. It functions in the pathway purine metabolism; AMP biosynthesis via salvage pathway; AMP from ADP: step 1/1. Functionally, catalyzes the reversible transfer of the terminal phosphate group between ATP and AMP. Plays an important role in cellular energy homeostasis and in adenine nucleotide metabolism. The chain is Adenylate kinase from Gloeobacter violaceus (strain ATCC 29082 / PCC 7421).